Consider the following 329-residue polypeptide: Glycerol-3-phosphate dehydrogenase [NAD(P)+] (329 aa).

Residues S13, W14, H34, and K105 each contribute to the NADPH site. 3 residues coordinate sn-glycerol 3-phosphate: K105, G134, and S136. A138 is an NADPH binding site. Residues K189, D242, S252, R253, and N254 each contribute to the sn-glycerol 3-phosphate site. K189 acts as the Proton acceptor in catalysis. Residue R253 coordinates NADPH. NADPH is bound by residues V277 and E279.

This sequence belongs to the NAD-dependent glycerol-3-phosphate dehydrogenase family.

The protein localises to the cytoplasm. It carries out the reaction sn-glycerol 3-phosphate + NAD(+) = dihydroxyacetone phosphate + NADH + H(+). It catalyses the reaction sn-glycerol 3-phosphate + NADP(+) = dihydroxyacetone phosphate + NADPH + H(+). The protein operates within membrane lipid metabolism; glycerophospholipid metabolism. Catalyzes the reduction of the glycolytic intermediate dihydroxyacetone phosphate (DHAP) to sn-glycerol 3-phosphate (G3P), the key precursor for phospholipid synthesis. The chain is Glycerol-3-phosphate dehydrogenase [NAD(P)+] from Legionella pneumophila (strain Lens).